A 93-amino-acid polypeptide reads, in one-letter code: Protein 6 (93 aa).

The span at 1 to 16 (MSSQQETNDKSNTQGH) shows a compositional bias: polar residues. Residues 1–52 (MSSQQETNDKSNTQGHPETDPEGKTGTDTGNTEDSPPDTDNVPITDDAIMDD) form a disordered region.

The protein localises to the virion. This chain is Protein 6 (6), found in Rice yellow stunt virus (RYSV).